We begin with the raw amino-acid sequence, 947 residues long: MSWLRFWGPWPLLTWQLLSLLVKEAQPLVWVKDPLQLTSNPLGPPEPWSSRSSHLPWESPHAPAPPAAPGDFDYLGPSASSQMSALPQEPTENLAPFLKELDSAGELPLGPEPFLAAHQDLNDKRTPEERLPEVVPLLNRDQNQALVQLPRLKWVQTTDLDRAAGHQADEILVPLDSKVSRPTKFVVSPKNLKKDLAERWSLPEIVGIPHQLSKPQRQKQTLPDDYLSMDTLYPGSLPPELRVNADEPPGPPEQVGLSQFHLEPKSQNPETLEDIQSSSLQEEAPAQLLQLPQEVEPSTQQEAPALPPESSMESLAQTPLNHEVTVQPPGEDQAHYNLPKFTVKPADVEVTMTSEPKNETESTQAQQEAPIQPPEEAEPSSTALRTTDPPPEHPEVTLPPSDKGQAQHSHLTEATVQPLDLELSITTEPTTEVKPSPTTEETSAQPPDPGLAITPEPTTEIGHSTALEKTRAPHPDQVQTLHRSLTEVTGPPTKLESSQDSLVQSETAPEEQKASTSTNICELCTCGDETLSCVGLSPKQRLRQVPVPEPDTYNGIFTTLNFQGNYISYLDGNVWKAYSWTEKLILSENYLTELPKDSFEGLLYLQYLDLSCNKIRYIERQTFESLPFLQYINLGCNLITKLSLGTFQAWHGMQFLHNLILNRNPLTTVEDPYLFELPALKYLDMGTTHITLTTLKNILTMTVELEKLILPSHMACCLCQFKNSIEAVCKTVKLHCNTACLTNSIHCPEEASVGNPEGAFMKMLQARKQHMSTQLTIESEAPSDSSGINLSGFGGDQLEIQLTEQLRSLIPNEDVRKFMSHVIRTLKMECSETHVQGSCAKLMLRTGLLMKLLSEQQEAKALNVEWDTDQQKTNYINENMEQNEQKEQKSSELMKEVPGDDYKNKLIFAISVTVILIILIIIFCLIEVNSHKRASEKYKDNPSISGA.

The first 27 residues, 1-27 (MSWLRFWGPWPLLTWQLLSLLVKEAQP), serve as a signal peptide directing secretion. Residues 28 to 905 (LVWVKDPLQL…EVPGDDYKNK (878 aa)) are Extracellular-facing. 4 disordered regions span residues 42-88 (LGPP…ALPQ), 226-257 (YLSMDTLYPGSLPPELRVNADEPPGPPEQVGL), 294-458 (EVEP…PEPT), and 484-514 (SLTEVTGPPTKLESSQDSLVQSETAPEEQKA). Residues 311 to 320 (SMESLAQTPL) show a composition bias toward polar residues. The N-linked (GlcNAc...) asparagine glycan is linked to N358. 3 stretches are compositionally biased toward polar residues: residues 404–415 (GQAQHSHLTEAT), 436–445 (SPTTEETSAQ), and 495–507 (LESSQDSLVQSET). LRR repeat units lie at residues 556-577 (IFTTLNFQGNYISYLDGNVWKA), 580-601 (WTEKLILSENYLTELPKDSFEG), 604-625 (YLQYLDLSCNKIRYIERQTFES), 628-649 (FLQYINLGCNLITKLSLGTFQA), 655-676 (FLHNLILNRNPLTTVEDPYLFE), and 679-699 (ALKYLDMGTTHITLTTLKNIL). N-linked (GlcNAc...) asparagine glycosylation occurs at N789. Positions 867 to 897 (DTDQQKTNYINENMEQNEQKEQKSSELMKEV) form a coiled coil. The chain crosses the membrane as a helical span at residues 906 to 926 (LIFAISVTVILIILIIIFCLI). Residues 927–947 (EVNSHKRASEKYKDNPSISGA) lie on the Cytoplasmic side of the membrane.

The protein localises to the membrane. In Homo sapiens (Human), this protein is Leucine-rich repeat-containing protein 37B (LRRC37B).